The primary structure comprises 301 residues: MSIDKSYCGFIAIVGRPNVGKSTLLNKLLGQKISITSRKAQTTRHRIVGIHTEGAYQAIYVDTPGLHMEEKRAINRLMNKAASSSIGDVELVIFVVEGTRWTLDDEMVLNKLRDGKAPVILAVNKVDNVQEKADLLPHLQFLASQMNFLDIVPISAETGLNVDTIAAIVRKHLPEATHHFPEDYITDRSQRFMASEIIREKLMRFLGAELPYSVTVEIERFVSNERGGYDINGLILVEREGQKKMVIGNKGAKIKTIGIEARKDMQEMFEAPVHLELWVKVKSGWADDERALRSLGYVDDL.

In terms of domain architecture, Era-type G spans 7–175 (YCGFIAIVGR…AAIVRKHLPE (169 aa)). The tract at residues 15–22 (GRPNVGKS) is G1. Residue 15-22 (GRPNVGKS) participates in GTP binding. The segment at 41-45 (QTTRH) is G2. The G3 stretch occupies residues 62–65 (DTPG). GTP contacts are provided by residues 62-66 (DTPGL) and 124-127 (NKVD). Residues 124-127 (NKVD) form a G4 region. The G5 stretch occupies residues 154 to 156 (ISA). The KH type-2 domain maps to 206-283 (LGAELPYSVT…HLELWVKVKS (78 aa)).

It belongs to the TRAFAC class TrmE-Era-EngA-EngB-Septin-like GTPase superfamily. Era GTPase family. In terms of assembly, monomer.

The protein resides in the cytoplasm. Its subcellular location is the cell inner membrane. In terms of biological role, an essential GTPase that binds both GDP and GTP, with rapid nucleotide exchange. Plays a role in 16S rRNA processing and 30S ribosomal subunit biogenesis and possibly also in cell cycle regulation and energy metabolism. The sequence is that of GTPase Era from Shigella dysenteriae serotype 1 (strain Sd197).